Here is a 357-residue protein sequence, read N- to C-terminus: UDP-N-acetylglucosamine--N-acetylmuramyl-(pentapeptide) pyrophosphoryl-undecaprenol N-acetylglucosamine transferase (357 aa).

UDP-N-acetyl-alpha-D-glucosamine contacts are provided by residues 15–17 (TGG), Asn-124, Arg-165, Ser-194, and Gln-288.

Belongs to the glycosyltransferase 28 family. MurG subfamily.

The protein resides in the cell inner membrane. It carries out the reaction di-trans,octa-cis-undecaprenyl diphospho-N-acetyl-alpha-D-muramoyl-L-alanyl-D-glutamyl-meso-2,6-diaminopimeloyl-D-alanyl-D-alanine + UDP-N-acetyl-alpha-D-glucosamine = di-trans,octa-cis-undecaprenyl diphospho-[N-acetyl-alpha-D-glucosaminyl-(1-&gt;4)]-N-acetyl-alpha-D-muramoyl-L-alanyl-D-glutamyl-meso-2,6-diaminopimeloyl-D-alanyl-D-alanine + UDP + H(+). Its pathway is cell wall biogenesis; peptidoglycan biosynthesis. Functionally, cell wall formation. Catalyzes the transfer of a GlcNAc subunit on undecaprenyl-pyrophosphoryl-MurNAc-pentapeptide (lipid intermediate I) to form undecaprenyl-pyrophosphoryl-MurNAc-(pentapeptide)GlcNAc (lipid intermediate II). The protein is UDP-N-acetylglucosamine--N-acetylmuramyl-(pentapeptide) pyrophosphoryl-undecaprenol N-acetylglucosamine transferase of Trichormus variabilis (strain ATCC 29413 / PCC 7937) (Anabaena variabilis).